The primary structure comprises 276 residues: Syntaxin-12 (276 aa).

Position 2 is an N-acetylserine (S2). At 2-248 (SYGPLDMYRN…RAAYYQKKSR (247 aa)) the chain is on the cytoplasmic side. Residues 33–131 (IQRISQATAQ…RRVSEKEKES (99 aa)) are a coiled coil. S139, S142, S218, and S225 each carry phosphoserine. The 63-residue stretch at 178–240 (LELIKERETA…ERATEQLQRA (63 aa)) folds into the t-SNARE coiled-coil homology domain. A helical; Anchor for type IV membrane protein transmembrane segment spans residues 249–269 (KKMCILVLVLSVIILILGLII). The Vesicular segment spans residues 270 to 276 (WLVYKTK).

It belongs to the syntaxin family. As to quaternary structure, interacts with NAPA and SNAP23. Identified in a complex containing STX6, STX12, VAMP4 and VTI1A. Associates with the BLOC-1 complex. Interacts with BLOC1S6. Interacts with GRIPAP1. Forms a complex with GRIP1, GRIA2 and NSG1; controls the intracellular fate of AMPAR and the endosomal sorting of the GRIA2 subunit toward recycling and membrane targeting. Interacts with NSG1. Interacts with TPC1. Interacts (via N-terminus) with VPS13B.

Its subcellular location is the endosome membrane. It is found in the golgi apparatus membrane. The protein localises to the endomembrane system. It localises to the early endosome membrane. The protein resides in the recycling endosome membrane. SNARE promoting fusion of transport vesicles with target membranes. Together with SNARE STX6, promotes movement of vesicles from endosomes to the cell membrane, and may therefore function in the endocytic recycling pathway. Through complex formation with GRIP1, GRIA2 and NSG1 controls the intracellular fate of AMPAR and the endosomal sorting of the GRIA2 subunit toward recycling and membrane targeting. The sequence is that of Syntaxin-12 (STX12) from Homo sapiens (Human).